Here is a 383-residue protein sequence, read N- to C-terminus: ATP phosphoribosyltransferase regulatory subunit (383 aa).

Belongs to the class-II aminoacyl-tRNA synthetase family. HisZ subfamily. As to quaternary structure, heteromultimer composed of HisG and HisZ subunits.

The protein resides in the cytoplasm. Its pathway is amino-acid biosynthesis; L-histidine biosynthesis; L-histidine from 5-phospho-alpha-D-ribose 1-diphosphate: step 1/9. In terms of biological role, required for the first step of histidine biosynthesis. May allow the feedback regulation of ATP phosphoribosyltransferase activity by histidine. This chain is ATP phosphoribosyltransferase regulatory subunit, found in Desulfitobacterium hafniense (strain Y51).